The chain runs to 539 residues: Chaperonin GroEL 2 (539 aa).

Residues 29 to 32, 86 to 90, Gly-414, 479 to 481, and Asp-495 each bind ATP; these read TIGP, DGTTT, and DAL.

The protein belongs to the chaperonin (HSP60) family. As to quaternary structure, forms a cylinder of 14 subunits composed of two heptameric rings stacked back-to-back. Interacts with the co-chaperonin GroES.

It localises to the cytoplasm. The catalysed reaction is ATP + H2O + a folded polypeptide = ADP + phosphate + an unfolded polypeptide.. In terms of biological role, together with its co-chaperonin GroES, plays an essential role in assisting protein folding. The GroEL-GroES system forms a nano-cage that allows encapsulation of the non-native substrate proteins and provides a physical environment optimized to promote and accelerate protein folding. This Synechococcus sp. (strain JA-2-3B'a(2-13)) (Cyanobacteria bacterium Yellowstone B-Prime) protein is Chaperonin GroEL 2.